The following is a 423-amino-acid chain: Sulfate adenylyltransferase (423 aa).

Positions 207 and 209 each coordinate sulfate. Residues 207 to 210 and 301 to 304 each bind ATP; these read QLRN and GRDH. Catalysis depends on residues R209 and N210. A305 is a binding site for sulfate.

It belongs to the sulfate adenylyltransferase family.

Its subcellular location is the mitosome. The catalysed reaction is sulfate + ATP + H(+) = adenosine 5'-phosphosulfate + diphosphate. Its pathway is sulfur metabolism; hydrogen sulfide biosynthesis; sulfite from sulfate: step 1/3. In terms of biological role, catalyzes the first intracellular reaction of sulfate assimilation, forming adenosine-5'-phosphosulfate (APS) from inorganic sulfate and ATP. This chain is Sulfate adenylyltransferase, found in Entamoeba histolytica (strain ATCC 30459 / HM-1:IMSS / ABRM).